The primary structure comprises 392 residues: Nicotinate phosphoribosyltransferase (392 aa).

His-214 carries the post-translational modification Phosphohistidine; by autocatalysis.

This sequence belongs to the NAPRTase family. Transiently phosphorylated on a His residue during the reaction cycle. Phosphorylation strongly increases the affinity for substrates and increases the rate of nicotinate D-ribonucleotide production. Dephosphorylation regenerates the low-affinity form of the enzyme, leading to product release.

It catalyses the reaction nicotinate + 5-phospho-alpha-D-ribose 1-diphosphate + ATP + H2O = nicotinate beta-D-ribonucleotide + ADP + phosphate + diphosphate. Its pathway is cofactor biosynthesis; NAD(+) biosynthesis; nicotinate D-ribonucleotide from nicotinate: step 1/1. Functionally, catalyzes the synthesis of beta-nicotinate D-ribonucleotide from nicotinate and 5-phospho-D-ribose 1-phosphate at the expense of ATP. This is Nicotinate phosphoribosyltransferase from Xanthomonas euvesicatoria pv. vesicatoria (strain 85-10) (Xanthomonas campestris pv. vesicatoria).